We begin with the raw amino-acid sequence, 277 residues long: MSLPEHSPLGKPSAYKTEYDASLLFPIPRQPKRTEIGLPEGKPVPFFGVDIWNAYELSWLNLKGKPQVALASFIIPSDTPNIIESKSFKLYLNSFNQTRIASPEALQQLLHHDLSEATGGTVQVRLVTEADLGKQKMGELDGLLLDRLDIEVDRYEPAPELLSADQQESPVEETLVSHLLKSNCLVTGQPDWGSVQIRYVGAPINQEGLLKYLISFRNHNEFHEQCVERIFMDVMRECKPVKLAVYARYTRRGGLDINPFRTNFNTAWPDNKRNARQ.

83 to 85 serves as a coordination point for substrate; the sequence is IES. 85-86 contributes to the NADPH binding site; the sequence is SK. The active-site Thioimide intermediate is Cys184. Catalysis depends on Asp191, which acts as the Proton donor. 223–224 contacts substrate; it reads HE. 252 to 253 is a binding site for NADPH; the sequence is RG.

The protein belongs to the GTP cyclohydrolase I family. QueF type 2 subfamily. As to quaternary structure, homodimer.

Its subcellular location is the cytoplasm. The catalysed reaction is 7-aminomethyl-7-carbaguanine + 2 NADP(+) = 7-cyano-7-deazaguanine + 2 NADPH + 3 H(+). The protein operates within tRNA modification; tRNA-queuosine biosynthesis. Functionally, catalyzes the NADPH-dependent reduction of 7-cyano-7-deazaguanine (preQ0) to 7-aminomethyl-7-deazaguanine (preQ1). This is NADPH-dependent 7-cyano-7-deazaguanine reductase from Cupriavidus necator (strain ATCC 17699 / DSM 428 / KCTC 22496 / NCIMB 10442 / H16 / Stanier 337) (Ralstonia eutropha).